Consider the following 322-residue polypeptide: Ferrochelatase (322 aa).

2 residues coordinate Fe cation: H194 and E275.

The protein belongs to the ferrochelatase family.

The protein resides in the cytoplasm. The enzyme catalyses heme b + 2 H(+) = protoporphyrin IX + Fe(2+). It participates in porphyrin-containing compound metabolism; protoheme biosynthesis; protoheme from protoporphyrin-IX: step 1/1. In terms of biological role, catalyzes the ferrous insertion into protoporphyrin IX. This chain is Ferrochelatase, found in Yersinia enterocolitica.